The chain runs to 230 residues: 6-carboxyhexanoate--CoA ligase (230 aa).

It belongs to the BioW family. In terms of assembly, homodimer. Mg(2+) serves as cofactor.

It catalyses the reaction heptanedioate + ATP + CoA = 6-carboxyhexanoyl-CoA + AMP + diphosphate. The protein operates within metabolic intermediate metabolism; pimeloyl-CoA biosynthesis; pimeloyl-CoA from pimelate: step 1/1. Its function is as follows. Catalyzes the transformation of pimelate into pimeloyl-CoA with concomitant hydrolysis of ATP to AMP. The sequence is that of 6-carboxyhexanoate--CoA ligase from Staphylococcus aureus (strain MSSA476).